Consider the following 568-residue polypeptide: N66 matrix protein (568 aa).

Positions 1 to 22 (MWRMTTLLHLTALLVLIPLCHC) are cleaved as a signal peptide. The Alpha-carbonic anhydrase domain maps to 55–567 (AGFSYNRDIC…KHPLRVYKNS (513 aa)). Zn(2+) is bound by residues His-154, His-156, and His-179. The interval 259-421 (NGNNGNNGNG…NGYNGDNGNS (163 aa)) is disordered. Residues 280–290 (GNNGNGNGNNG) are compositionally biased toward gly residues. The segment covering 291–318 (YNGNNGYNGNNGNNGNGNNDNNGNDNNG) has biased composition (low complexity). Gly residues-rich tracts occupy residues 319-352 (NNGGNGNNGNNGNGNNGNNGNGNNGNNGGNGNNG) and 362-380 (NGNGNNGNNGGNGNNGNNG). Asn-389 carries an N-linked (GlcNAc...) asparagine glycan. The segment covering 390-413 (GSNGNNGGNGNNGNNGDNGNGDNG) has biased composition (gly residues). 506–507 (TT) is a binding site for substrate. A glycan (N-linked (GlcNAc...) asparagine) is linked at Asn-511.

It belongs to the alpha-carbonic anhydrase family. In terms of assembly, homooligomer; disulfide-linked. May also be disulfide-linked to insoluble organic matrix. It depends on Zn(2+) as a cofactor. Expressed in both the dorsal region of the mantle and the mantle edge. Is dispersed in calcium carbonate and also linked by disulfide bonds to the organic core of nacre.

Its subcellular location is the secreted. It localises to the extracellular space. The protein localises to the extracellular matrix. The catalysed reaction is hydrogencarbonate + H(+) = CO2 + H2O. In terms of biological role, acts as a negative regulator for calcification in the shells of mollusks. May function both as a calcium concentrator and as a carbonic anhydrase required for production of carbonate ions, which are assembled to CaCO(3) at mineralization sites. Is important for shell formation in both the calcitic prismatic layer and the aragonitic nacreous layer. The protein is N66 matrix protein of Pinctada maxima (Silver-lipped pearl oyster).